A 925-amino-acid chain; its full sequence is Aspulvinone E synthetase melA (925 aa).

Positions 11–434 (ETAAARNGDG…GGRAKETIII (424 aa)) are adenylation (A) domain. The Carrier domain maps to 564-644 (SPKNDFEKGL…ELAAALDNLY (81 aa)). Position 601 is an O-(pantetheine 4'-phosphoryl)serine (serine 601). A thioesterase (TE) domain region spans residues 663–923 (PLWLVHPGAG…KILRSALAER (261 aa)).

Belongs to the ATP-dependent AMP-binding enzyme family.

The protein resides in the cytoplasm. Functionally, nonribosomal peptide synthase; part of the gene cluster that mediates the biosynthesis of Asp-melanin, a pigment that confers resistance against UV light and hampers phagocytosis by soil amoeba. The nonribosomal peptide synthase melA converts 4-hydroxyphenylpyruvate (4-HPPA) to aspulvinone E. The tyrosinase tyrP then performs hydroxylations of both aromatic moieties of aspulvinone E. The product of tyrP is highly unstable, and, due to the high reactivity of methides and ortho-diquinones, the polymeric Asp-melanin forms spontaneously. The sequence is that of Aspulvinone E synthetase melA from Aspergillus terreus.